A 213-amino-acid polypeptide reads, in one-letter code: Phosphatidylserine decarboxylase proenzyme (213 aa).

Serine 180 serves as the catalytic Schiff-base intermediate with substrate; via pyruvic acid. Serine 180 carries the pyruvic acid (Ser); by autocatalysis modification.

It belongs to the phosphatidylserine decarboxylase family. PSD-A subfamily. As to quaternary structure, heterodimer of a large membrane-associated beta subunit and a small pyruvoyl-containing alpha subunit. The cofactor is pyruvate. In terms of processing, is synthesized initially as an inactive proenzyme. Formation of the active enzyme involves a self-maturation process in which the active site pyruvoyl group is generated from an internal serine residue via an autocatalytic post-translational modification. Two non-identical subunits are generated from the proenzyme in this reaction, and the pyruvate is formed at the N-terminus of the alpha chain, which is derived from the carboxyl end of the proenzyme. The post-translation cleavage follows an unusual pathway, termed non-hydrolytic serinolysis, in which the side chain hydroxyl group of the serine supplies its oxygen atom to form the C-terminus of the beta chain, while the remainder of the serine residue undergoes an oxidative deamination to produce ammonia and the pyruvoyl prosthetic group on the alpha chain.

The protein localises to the cell membrane. The enzyme catalyses a 1,2-diacyl-sn-glycero-3-phospho-L-serine + H(+) = a 1,2-diacyl-sn-glycero-3-phosphoethanolamine + CO2. It functions in the pathway phospholipid metabolism; phosphatidylethanolamine biosynthesis; phosphatidylethanolamine from CDP-diacylglycerol: step 2/2. Functionally, catalyzes the formation of phosphatidylethanolamine (PtdEtn) from phosphatidylserine (PtdSer). The polypeptide is Phosphatidylserine decarboxylase proenzyme (Carboxydothermus hydrogenoformans (strain ATCC BAA-161 / DSM 6008 / Z-2901)).